Reading from the N-terminus, the 180-residue chain is Oligoribonuclease (180 aa).

The Exonuclease domain maps to 7-170; sequence LIWIDLEMTG…DDIRESIAEL (164 aa). Y128 is an active-site residue.

Belongs to the oligoribonuclease family.

Its subcellular location is the cytoplasm. Its function is as follows. 3'-to-5' exoribonuclease specific for small oligoribonucleotides. The sequence is that of Oligoribonuclease from Pseudomonas paraeruginosa (strain DSM 24068 / PA7) (Pseudomonas aeruginosa (strain PA7)).